Consider the following 838-residue polypeptide: Tuftelin-interacting protein 11 (838 aa).

Basic and acidic residues predominate over residues 1–13 (MSLSHLYRDGEGH). The required for interaction with DHX15 stretch occupies residues 1 to 51 (MSLSHLYRDGEGHLDDDDDDERENFEITDWDLQNEFNPNRQRHWQTKEEAT). 2 disordered regions span residues 1–74 (MSLS…RARD) and 86–137 (LKKG…SGGT). Position 2 is a phosphoserine (serine 2). Over residues 14-29 (LDDDDDDERENFEITD) the composition is skewed to acidic residues. The segment covering 45–65 (QTKEEATYGVWAERDSDEERP) has biased composition (basic and acidic residues). Phosphoserine occurs at positions 60, 96, and 99. Positions 92–101 (EEADSEDSDA) are enriched in acidic residues. Residues 102–117 (EEKPVKQEDFPKDLGP) are compositionally biased toward basic and acidic residues. Serine 145 bears the Phosphoserine mark. The region spanning 150–196 (TKGIGQKLLQKMGYVPGRGLGKNAQGIINPIEAKQRKGKGAVGAYGS) is the G-patch domain. The tract at residues 193–237 (AYGSERTTQSLQDFPVADSEEEAEEEFQKELSQWRKDPSGSKKKP) is disordered. At serine 211 the chain carries Phosphoserine. Residues 218-232 (EFQKELSQWRKDPSG) show a composition bias toward basic and acidic residues. Residues 701–706 (VKDKFN) carry the Nuclear localization signal motif. A required for nuclear speckle localization region spans residues 711–735 (IMNRAVSSNVGAYMQPGARENIAYL).

The protein belongs to the TFP11/STIP family. As to quaternary structure, identified in the spliceosome C complex. Found in the Intron Large (IL) complex, a post-mRNA release spliceosomal complex containing the excised intron, U2, U5 and U6 snRNPs, and splicing factors. Interacts with TUFT1. Interacts with DHX15; indicative for a recruitment of DHX15 to the IL complex. Interacts with GCFC2. Widely expressed. In tooth it is expressed in ameloblasts and odontoblasts.

The protein localises to the cytoplasm. Its subcellular location is the nucleus. In terms of biological role, involved in pre-mRNA splicing, specifically in spliceosome disassembly during late-stage splicing events. Intron turnover seems to proceed through reactions in two lariat-intron associated complexes termed Intron Large (IL) and Intron Small (IS). In cooperation with DHX15 seems to mediate the transition of the U2, U5 and U6 snRNP-containing IL complex to the snRNP-free IS complex leading to efficient debranching and turnover of excised introns. May play a role in the differentiation of ameloblasts and odontoblasts or in the forming of the enamel extracellular matrix. The protein is Tuftelin-interacting protein 11 (Tfip11) of Mus musculus (Mouse).